Here is a 379-residue protein sequence, read N- to C-terminus: Homoserine O-succinyltransferase (379 aa).

In terms of domain architecture, AB hydrolase-1 spans 51 to 360; the sequence is NAVLICHALS…DAPQGHDAFL (310 aa). Serine 157 serves as the catalytic Nucleophile. Arginine 227 contributes to the substrate binding site. Active-site residues include aspartate 323 and histidine 356. A substrate-binding site is contributed by aspartate 357.

The protein belongs to the AB hydrolase superfamily. MetX family. In terms of assembly, homodimer.

The protein localises to the cytoplasm. It carries out the reaction L-homoserine + succinyl-CoA = O-succinyl-L-homoserine + CoA. It participates in amino-acid biosynthesis; L-methionine biosynthesis via de novo pathway; O-succinyl-L-homoserine from L-homoserine: step 1/1. Its function is as follows. Transfers a succinyl group from succinyl-CoA to L-homoserine, forming succinyl-L-homoserine. This chain is Homoserine O-succinyltransferase, found in Pseudomonas fluorescens (strain Pf0-1).